The primary structure comprises 301 residues: Probable alpha-L-glutamate ligase (301 aa).

The ATP-grasp domain maps to Leu-104–Glu-287. ATP-binding positions include Lys-141, Glu-178–Phe-179, Asp-187, and Arg-211–Asn-213. Residues Asp-248, Glu-260, and Asn-262 each contribute to the Mg(2+) site. Mn(2+)-binding residues include Asp-248, Glu-260, and Asn-262.

This sequence belongs to the RimK family. Mg(2+) is required as a cofactor. Mn(2+) serves as cofactor.

This is Probable alpha-L-glutamate ligase from Maridesulfovibrio salexigens (strain ATCC 14822 / DSM 2638 / NCIMB 8403 / VKM B-1763) (Desulfovibrio salexigens).